Consider the following 645-residue polypeptide: Leucine-rich repeat protein soc-2 homolog (645 aa).

Low complexity predominate over residues 1–19; that stretch reads MNLCSSGATASTTSLSSTG. Disordered regions lie at residues 1 to 67 and 83 to 151; these read MNLC…AGGS and NSPA…IQAD. Composition is skewed to gly residues over residues 26-49 and 88-97; these read GVPG…GGGS and GAGGASGSTG. Residues 98–107 show a composition bias toward low complexity; it reads SGQQPTGSNG. 20 LRR repeats span residues 165 to 186, 188 to 209, 211 to 232, 234 to 255, 257 to 278, 280 to 301, 303 to 324, 326 to 347, 349 to 371, 372 to 393, 396 to 417, 420 to 441, 444 to 465, 467 to 488, 490 to 511, 513 to 534, 536 to 557, 559 to 580, 582 to 604, and 606 to 627; these read GIKR…VKEC, HLTE…IGCL, SLRN…LQNC, QLKV…IYRL, SLTT…LRQL, NLTM…IGAL, NLTT…IGNC, NLSA…IGNL, SLVR…KNCK, SMDE…MLAS, GLTT…GPAQ, NVYS…IFSR, GLTK…IGTW, NMVE…IMNL, NLEI…IGNL, RLRI…IGLL, ELQR…IGHL, NLTH…IGSL, SLEN…LALC, and NLKY…IQAG.

The protein belongs to the SHOC2 family.

Its function is as follows. Acts as a Ras effector and participates in MAPK pathway activation. Probably acts as a regulatory subunit of protein phosphatase that specifically dephosphorylates Raf kinase and stimulate Raf activity at specialized signaling complexes upon Ras activation. The polypeptide is Leucine-rich repeat protein soc-2 homolog (Sur-8) (Drosophila yakuba (Fruit fly)).